Reading from the N-terminus, the 385-residue chain is Lipoyl synthase, mitochondrial (385 aa).

Positions 107, 112, 118, 137, 141, 144, and 352 each coordinate [4Fe-4S] cluster. In terms of domain architecture, Radical SAM core spans 122–341 (KKSEATATIM…RDTALKMGFL (220 aa)).

Belongs to the radical SAM superfamily. Lipoyl synthase family. [4Fe-4S] cluster serves as cofactor.

It localises to the mitochondrion. The catalysed reaction is [[Fe-S] cluster scaffold protein carrying a second [4Fe-4S](2+) cluster] + N(6)-octanoyl-L-lysyl-[protein] + 2 oxidized [2Fe-2S]-[ferredoxin] + 2 S-adenosyl-L-methionine + 4 H(+) = [[Fe-S] cluster scaffold protein] + N(6)-[(R)-dihydrolipoyl]-L-lysyl-[protein] + 4 Fe(3+) + 2 hydrogen sulfide + 2 5'-deoxyadenosine + 2 L-methionine + 2 reduced [2Fe-2S]-[ferredoxin]. Its pathway is protein modification; protein lipoylation via endogenous pathway; protein N(6)-(lipoyl)lysine from octanoyl-[acyl-carrier-protein]: step 2/2. Its function is as follows. Catalyzes the radical-mediated insertion of two sulfur atoms into the C-6 and C-8 positions of the octanoyl moiety bound to the lipoyl domains of lipoate-dependent enzymes, thereby converting the octanoylated domains into lipoylated derivatives. This is Lipoyl synthase, mitochondrial from Meyerozyma guilliermondii (strain ATCC 6260 / CBS 566 / DSM 6381 / JCM 1539 / NBRC 10279 / NRRL Y-324) (Yeast).